The sequence spans 878 residues: Aconitate hydratase A (878 aa).

[4Fe-4S] cluster-binding residues include C426, C492, and C495.

Belongs to the aconitase/IPM isomerase family. As to quaternary structure, monomer. [4Fe-4S] cluster is required as a cofactor.

It catalyses the reaction citrate = D-threo-isocitrate. The enzyme catalyses (2S,3R)-3-hydroxybutane-1,2,3-tricarboxylate = 2-methyl-cis-aconitate + H2O. It functions in the pathway carbohydrate metabolism; tricarboxylic acid cycle; isocitrate from oxaloacetate: step 2/2. Its pathway is organic acid metabolism; propanoate degradation. Functionally, involved in the catabolism of short chain fatty acids (SCFA) via the tricarboxylic acid (TCA)(acetyl degradation route) and probably the 2-methylcitrate cycle I (propionate degradation route). Catalyzes the reversible isomerization of citrate to isocitrate via cis-aconitate. Could catalyze the hydration of 2-methyl-cis-aconitate to yield (2R,3S)-2-methylisocitrate. The apo form of AcnA functions as a RNA-binding regulatory protein. This chain is Aconitate hydratase A (acnA), found in Rickettsia prowazekii (strain Madrid E).